Consider the following 784-residue polypeptide: SWI/SNF complex subunit SWI3C homolog (784 aa).

Residues 1–10 (MPRKASSTSD) are compositionally biased toward polar residues. Residues 1–68 (MPRKASSTSD…PEDADDETLA (68 aa)) are disordered. Over residues 24 to 39 (ASPSPSNRSSAAAAAA) the composition is skewed to low complexity. The span at 43–66 (DDSDSAAVNEDDDSAVPEDADDET) shows a compositional bias: acidic residues. One can recognise an SWIRM domain in the interval 185-284 (HVVPKHSDWF…YLASGSVHRG (100 aa)). The segment at 355–409 (LSESSCSYCLQPLTSLHYQSLKEADIALCSDCFHDARYITGHSSLDFQRIDGDND) adopts a ZZ-type; degenerate zinc-finger fold. Residues Cys-360, Cys-363, Cys-383, and Cys-386 each contribute to the Zn(2+) site. The SANT domain maps to 413 to 464 (NDGDSWTDQETLLLLEGIEKYNDNWNNIAEHVGTKSKAQCIYHFIRLPVEDG). Disordered stretches follow at residues 667 to 702 (LASP…SMPQ) and 760 to 784 (GMPN…SSVG). Residues 675 to 695 (PGGSTSTMSSNPMSMSPRPMG) are compositionally biased toward low complexity.

Interacts with LFR. Interacts with NMCP1.

It localises to the nucleus. It is found in the nucleoplasm. In terms of biological role, component of a multiprotein complex equivalent of the SWI/SNF complex, an ATP-dependent chromatin-remodeling complex, which is required for the positive and negative regulation of gene expression of a large number of genes. It changes chromatin structure by altering DNA-histone contacts within a nucleosome, leading eventually to a change in nucleosome position, thus facilitating or repressing binding of gene-specific transcription factors. May be involved in positive response to drought stress and modulation of root growth through its interaction with NMCP1. The sequence is that of SWI/SNF complex subunit SWI3C homolog from Oryza sativa subsp. japonica (Rice).